Consider the following 436-residue polypeptide: Homeobox protein PKNOX1 (436 aa).

A disordered region spans residues 24-49; that stretch reads LKTEQDPNCSEPDVEGVSPPPVGSQT. Residues S33 and S41 each carry the phosphoserine modification. Residues 80–163 form the MEIS N-terminal domain; the sequence is GSEGTTSASF…MNSETLLSGE (84 aa). Positions 259–321 form a DNA-binding region, homeobox; TALE-type; that stretch reads SKNKRGVLPK…NARRRILQPM (63 aa). Positions 401–436 are disordered; it reads AEQSEDDSVDSTGDGGAALAPGHLGGLVLENSDSLQ.

It belongs to the TALE/MEIS homeobox family. As to quaternary structure, interacts with MN1.

It is found in the nucleus. In terms of biological role, activates transcription in the presence of PBX1A and HOXA1. This chain is Homeobox protein PKNOX1, found in Bos taurus (Bovine).